Reading from the N-terminus, the 749-residue chain is MGLLRLVFLLSWAASAGGLYGNPLNKYIRHYEGLSYNVDSLHQKHQRAKRAVSQEDQFVHLDFQAHGRQFNLRMKKDTSLFSPDFKLEVGGETVNYDTSHIYTGQLFGEQGTLSHGSVVDGKSKGLLKPLKAHSYVEPSERFFKDQAVPFHSVMYHEDDIKYPHKYGSEGGCADSSVFKRMKEYQMSVQEEPEKHDHKEDHEDSGPVILRKKRAAQAEKNTCQLFIQTDHLFYKRYGETREAVIAQISSHVKAIDTIYQSTDFSGIRNISFMVKRIRINVTSDEKDPTNPFRFPNIGVEKFLELNSEQNHDDYCLAYVFTDRDFDDGVLGLAWVGAPSGSSGGICERNKLYSDGKKKSLNTGIITVQNYGSHVPPKVSHITFAHEVGHNFGSPHDSGNECTPGEAKNLGFKENGNFIMYARTTSGDKLNNNKFSICSVRNISQVLDKKENSCFVESGQPICGNGLVEPGEQCDCGYSDQCKDECCYDANQPENLKCTLKPGKQCSPSQGPCCTTDCTFKRASENCREESDCAKMGTCNGNSAQCPPSEPRENLTECNRATQVCIKGQCSGSICERYDLEECTCGSTDEKDDKELCHVCCMEKMKPHTCASTGSEAWKAYFKGKTITLQPGSPCNEFKGYCDVFMRCRLVDADGPLARLKKAIFNPELYENIAEWIVAHWWAVLLMGIALIMLMAGFIKICSVHTPSSNPKLPPPKPLPGTLKRRRPPQTTQQPSRQRPRENYQMGHMRH.

Positions 1–18 (MGLLRLVFLLSWAASAGG) are cleaved as a signal peptide. The propeptide occupies 19-213 (LYGNPLNKYI…SGPVILRKKR (195 aa)). Over 19 to 673 (LYGNPLNKYI…NPELYENIAE (655 aa)) the chain is Extracellular. The short motif at 170–177 (GGCADSSV) is the Cysteine switch element. Cys-172 lines the Zn(2+) pocket. Residues 220–457 (NTCQLFIQTD…KENSCFVESG (238 aa)) form the Peptidase M12B domain. 17 cysteine pairs are disulfide-bonded: Cys-222–Cys-314, Cys-345–Cys-452, Cys-400–Cys-436, Cys-461–Cys-496, Cys-472–Cys-485, Cys-474–Cys-480, Cys-484–Cys-516, Cys-504–Cys-512, Cys-511–Cys-537, Cys-525–Cys-544, Cys-531–Cys-563, Cys-556–Cys-568, Cys-573–Cys-599, Cys-581–Cys-608, Cys-583–Cys-598, Cys-595–Cys-640, and Cys-633–Cys-646. Residues Asn-268 and Asn-279 are each glycosylated (N-linked (GlcNAc...) asparagine). His-384 lines the Zn(2+) pocket. Glu-385 is an active-site residue. Residues His-388 and His-394 each coordinate Zn(2+). Asn-440 carries an N-linked (GlcNAc...) asparagine glycan. In terms of domain architecture, Disintegrin spans 458-552 (QPICGNGLVE…QCPPSEPREN (95 aa)). Asn-552 carries an N-linked (GlcNAc...) asparagine glycan. The helical transmembrane segment at 674–694 (WIVAHWWAVLLMGIALIMLMA) threads the bilayer. Residues 695 to 749 (GFIKICSVHTPSSNPKLPPPKPLPGTLKRRRPPQTTQQPSRQRPRENYQMGHMRH) are Cytoplasmic-facing. The segment at 705-749 (PSSNPKLPPPKPLPGTLKRRRPPQTTQQPSRQRPRENYQMGHMRH) is disordered. The short motif at 709 to 716 (PKLPPPKP) is the SH3-binding element. Thr-720 bears the Phosphothreonine mark. Positions 723 to 729 (RRRPPQT) match the SH3-binding motif.

Zn(2+) is required as a cofactor. The precursor is cleaved by furin and PCSK7.

It localises to the membrane. The catalysed reaction is Endopeptidase of broad specificity.. Controls the proteolytic processing of Notch and mediates lateral inhibition during neurogenesis. The sequence is that of Disintegrin and metalloproteinase domain-containing protein 10 (adam10) from Xenopus laevis (African clawed frog).